The sequence spans 197 residues: Holliday junction resolvase RecU (197 aa).

The interval Met1–Asn21 is disordered. The Mg(2+) site is built by Thr82, Asp84, Asp97, and Gln116.

It belongs to the RecU family. Mg(2+) serves as cofactor.

It localises to the cytoplasm. The catalysed reaction is Endonucleolytic cleavage at a junction such as a reciprocal single-stranded crossover between two homologous DNA duplexes (Holliday junction).. Functionally, endonuclease that resolves Holliday junction intermediates in genetic recombination. Cleaves mobile four-strand junctions by introducing symmetrical nicks in paired strands. Promotes annealing of linear ssDNA with homologous dsDNA. Required for DNA repair, homologous recombination and chromosome segregation. This is Holliday junction resolvase RecU from Oenococcus oeni (strain ATCC BAA-331 / PSU-1).